A 404-amino-acid chain; its full sequence is Imidazolonepropionase (404 aa).

Residues H70 and H72 each coordinate Fe(3+). Residues H70 and H72 each coordinate Zn(2+). The 4-imidazolone-5-propanoate site is built by R79, Y142, and H174. Y142 contacts N-formimidoyl-L-glutamate. H234 contributes to the Fe(3+) binding site. H234 contributes to the Zn(2+) binding site. A 4-imidazolone-5-propanoate-binding site is contributed by E237. Position 308 (D308) interacts with Fe(3+). D308 contacts Zn(2+).

Belongs to the metallo-dependent hydrolases superfamily. HutI family. It depends on Zn(2+) as a cofactor. Fe(3+) serves as cofactor.

Its subcellular location is the cytoplasm. It carries out the reaction 4-imidazolone-5-propanoate + H2O = N-formimidoyl-L-glutamate. It participates in amino-acid degradation; L-histidine degradation into L-glutamate; N-formimidoyl-L-glutamate from L-histidine: step 3/3. Catalyzes the hydrolytic cleavage of the carbon-nitrogen bond in imidazolone-5-propanoate to yield N-formimidoyl-L-glutamate. It is the third step in the universal histidine degradation pathway. This chain is Imidazolonepropionase, found in Thermoplasma volcanium (strain ATCC 51530 / DSM 4299 / JCM 9571 / NBRC 15438 / GSS1).